A 243-amino-acid polypeptide reads, in one-letter code: NAD-dependent protein deacetylase (243 aa).

Positions 1 to 243 constitute a Deacetylase sirtuin-type domain; it reads MRNDLETLKH…VSVVKSLMTE (243 aa). NAD(+)-binding residues include alanine 24, phenylalanine 35, arginine 36, glutamine 105, isoleucine 107, aspartate 108, and histidine 123. Phenylalanine 35 lines the nicotinamide pocket. Isoleucine 107 and aspartate 108 together coordinate nicotinamide. The Proton acceptor role is filled by histidine 123. Residues cysteine 131, cysteine 134, cysteine 151, and cysteine 154 each coordinate Zn(2+). Residues serine 192, serine 193, asparagine 215, and aspartate 232 each coordinate NAD(+).

This sequence belongs to the sirtuin family. Class U subfamily. It depends on Zn(2+) as a cofactor.

The protein localises to the cytoplasm. The catalysed reaction is N(6)-acetyl-L-lysyl-[protein] + NAD(+) + H2O = 2''-O-acetyl-ADP-D-ribose + nicotinamide + L-lysyl-[protein]. In terms of biological role, NAD-dependent protein deacetylase which modulates the activities of several enzymes which are inactive in their acetylated form. This is NAD-dependent protein deacetylase from Staphylococcus aureus (strain MSSA476).